The primary structure comprises 227 residues: MAYPFQLGFQDATSPIMEELLHFHDHTLMIVFLISSLVLYVISAMLTTNLTHTSTMDAQEVETIWTILPAIILITIALPSLRILYMMDEINNPAMTIKTMGHQWYWSYEYTDYHDLSFDSYMVPTSDLKPGELRLLEVDNRVVLPVEMTIRMLISSEDVLHSWAVPSLGLKTDAIPGRLNQTTLLSIRPGLYYGQCSEICGSNHSFMPIVLEVVPLEYFEKWSVSML.

Residues 1 to 14 lie on the Mitochondrial intermembrane side of the membrane; the sequence is MAYPFQLGFQDATS. A helical transmembrane segment spans residues 15 to 45; that stretch reads PIMEELLHFHDHTLMIVFLISSLVLYVISAM. The Mitochondrial matrix portion of the chain corresponds to 46–59; it reads LTTNLTHTSTMDAQ. Residues 60–87 traverse the membrane as a helical segment; the sequence is EVETIWTILPAIILITIALPSLRILYMM. At 88–227 the chain is on the mitochondrial intermembrane side; sequence DEINNPAMTI…YFEKWSVSML (140 aa). Positions 161, 196, 198, 200, 204, and 207 each coordinate Cu cation. E198 contributes to the Mg(2+) binding site. Position 218 is a phosphotyrosine (Y218).

Belongs to the cytochrome c oxidase subunit 2 family. In terms of assembly, component of the cytochrome c oxidase (complex IV, CIV), a multisubunit enzyme composed of 14 subunits. The complex is composed of a catalytic core of 3 subunits MT-CO1, MT-CO2 and MT-CO3, encoded in the mitochondrial DNA, and 11 supernumerary subunits COX4I, COX5A, COX5B, COX6A, COX6B, COX6C, COX7A, COX7B, COX7C, COX8 and NDUFA4, which are encoded in the nuclear genome. The complex exists as a monomer or a dimer and forms supercomplexes (SCs) in the inner mitochondrial membrane with NADH-ubiquinone oxidoreductase (complex I, CI) and ubiquinol-cytochrome c oxidoreductase (cytochrome b-c1 complex, complex III, CIII), resulting in different assemblies (supercomplex SCI(1)III(2)IV(1) and megacomplex MCI(2)III(2)IV(2)). Found in a complex with TMEM177, COA6, COX18, COX20, SCO1 and SCO2. Interacts with TMEM177 in a COX20-dependent manner. Interacts with COX20. Interacts with COX16. Requires Cu cation as cofactor.

The protein resides in the mitochondrion inner membrane. It carries out the reaction 4 Fe(II)-[cytochrome c] + O2 + 8 H(+)(in) = 4 Fe(III)-[cytochrome c] + 2 H2O + 4 H(+)(out). Functionally, component of the cytochrome c oxidase, the last enzyme in the mitochondrial electron transport chain which drives oxidative phosphorylation. The respiratory chain contains 3 multisubunit complexes succinate dehydrogenase (complex II, CII), ubiquinol-cytochrome c oxidoreductase (cytochrome b-c1 complex, complex III, CIII) and cytochrome c oxidase (complex IV, CIV), that cooperate to transfer electrons derived from NADH and succinate to molecular oxygen, creating an electrochemical gradient over the inner membrane that drives transmembrane transport and the ATP synthase. Cytochrome c oxidase is the component of the respiratory chain that catalyzes the reduction of oxygen to water. Electrons originating from reduced cytochrome c in the intermembrane space (IMS) are transferred via the dinuclear copper A center (CU(A)) of subunit 2 and heme A of subunit 1 to the active site in subunit 1, a binuclear center (BNC) formed by heme A3 and copper B (CU(B)). The BNC reduces molecular oxygen to 2 water molecules using 4 electrons from cytochrome c in the IMS and 4 protons from the mitochondrial matrix. The sequence is that of Cytochrome c oxidase subunit 2 (MT-CO2) from Macrotus californicus (Californian leaf-nosed bat).